The following is a 92-amino-acid chain: Cell division topological specificity factor (92 aa).

It belongs to the MinE family.

In terms of biological role, prevents the cell division inhibition by proteins MinC and MinD at internal division sites while permitting inhibition at polar sites. This ensures cell division at the proper site by restricting the formation of a division septum at the midpoint of the long axis of the cell. The chain is Cell division topological specificity factor from Colwellia psychrerythraea (strain 34H / ATCC BAA-681) (Vibrio psychroerythus).